The chain runs to 295 residues: Diaminopimelate epimerase (295 aa).

Asn11 and Asn67 together coordinate substrate. Catalysis depends on Cys76, which acts as the Proton donor. Residues 77-78 (GN), Asn171, Asn210, and 228-229 (ER) contribute to the substrate site. Cys237 (proton acceptor) is an active-site residue. 238 to 239 (GT) provides a ligand contact to substrate.

This sequence belongs to the diaminopimelate epimerase family. In terms of assembly, homodimer.

The protein localises to the cytoplasm. It carries out the reaction (2S,6S)-2,6-diaminopimelate = meso-2,6-diaminopimelate. It participates in amino-acid biosynthesis; L-lysine biosynthesis via DAP pathway; DL-2,6-diaminopimelate from LL-2,6-diaminopimelate: step 1/1. Catalyzes the stereoinversion of LL-2,6-diaminopimelate (L,L-DAP) to meso-diaminopimelate (meso-DAP), a precursor of L-lysine. The polypeptide is Diaminopimelate epimerase (Methanocaldococcus jannaschii (strain ATCC 43067 / DSM 2661 / JAL-1 / JCM 10045 / NBRC 100440) (Methanococcus jannaschii)).